A 367-amino-acid chain; its full sequence is MRWLLPWTLAAVAVLRVGNILATALSPTPTTMTFTPAPLEETTTRPEFCKWPCECPQSPPRCPLGVSLITDGCECCKICAQQLGDNCTEAAICDPHRGLYCDYSGDRPRYAIGVCAQVVGVGCVLDGVRYTNGESFQPNCRYNCTCIDGTVGCTPLCLSPRPPRLWCRQPRHVRVPGQCCEQWVCDDDARRPRQTALLDTRAFAASGAVEQRYENCIAYTSPWSPCSTTCGLGISTRISNVNARCWPEQESRLCNLRPCDVDIQLHIKAGKKCLAVYQPEEATNFTLAGCVSTRTYRPKYCGVCTDNRCCIPYKSKTISVDFQCPEGPGFSRQVLWINACFCNLSCRNPNDIFADLESYPDFEEIAN.

An N-terminal signal peptide occupies residues 1 to 22; that stretch reads MRWLLPWTLAAVAVLRVGNILA. Residues 45 to 118 enclose the IGFBP N-terminal domain; that stretch reads RPEFCKWPCE…RYAIGVCAQV (74 aa). Disulfide bonds link C49–C73, C53–C75, C55–C76, and C62–C79. N-linked (GlcNAc...) asparagine glycosylation occurs at N86. 2 cysteine pairs are disulfide-bonded: C87–C101 and C93–C115. Residues 121 to 186 form the VWFC domain; it reads VGCVLDGVRY…GQCCEQWVCD (66 aa). Residue N143 is glycosylated (N-linked (GlcNAc...) asparagine). The TSP type-1 domain occupies 215 to 260; that stretch reads NCIAYTSPWSPCSTTCGLGISTRISNVNARCWPEQESRLCNLRPCD. Cystine bridges form between C273–C310, C290–C324, C301–C340, C304–C342, and C309–C346. Positions 273-347 constitute a CTCK domain; it reads CLAVYQPEEA…NACFCNLSCR (75 aa). A glycan (N-linked (GlcNAc...) asparagine) is linked at N284. N343 carries N-linked (GlcNAc...) asparagine glycosylation.

The protein belongs to the CCN family. In terms of tissue distribution, highly expressed in kidney and lung. Lower levels in heart, brain, spleen, liver, skeletal muscle and testis. Expressed in low metastatic melanoma cells.

The protein resides in the secreted. Functionally, downstream regulator in the Wnt/Frizzled-signaling pathway. Associated with cell survival. Adheres to skin and melanoma fibroblasts. In vitro binding to skin fibroblasts occurs through the proteoglycans, decorin and biglycan. Suppresses tumor growth in vivo. The chain is CCN family member 4 (Ccn4) from Mus musculus (Mouse).